The sequence spans 448 residues: Phosphoglucosamine mutase (448 aa).

Residue serine 104 is the Phosphoserine intermediate of the active site. Residues serine 104, aspartate 243, aspartate 245, and aspartate 247 each coordinate Mg(2+). Serine 104 is modified (phosphoserine).

The protein belongs to the phosphohexose mutase family. Mg(2+) is required as a cofactor. In terms of processing, activated by phosphorylation.

The enzyme catalyses alpha-D-glucosamine 1-phosphate = D-glucosamine 6-phosphate. In terms of biological role, catalyzes the conversion of glucosamine-6-phosphate to glucosamine-1-phosphate. The chain is Phosphoglucosamine mutase from Xylella fastidiosa (strain Temecula1 / ATCC 700964).